Here is a 364-residue protein sequence, read N- to C-terminus: 3-dehydroquinate synthase (364 aa).

NAD(+)-binding positions include 75–80 (DGEQYK), 109–113 (GVIGD), 133–134 (TT), K146, K155, and 173–176 (TLDT). Residues E188, H251, and H268 each contribute to the Zn(2+) site.

The protein belongs to the sugar phosphate cyclases superfamily. Dehydroquinate synthase family. It depends on Co(2+) as a cofactor. Zn(2+) is required as a cofactor. Requires NAD(+) as cofactor.

It is found in the cytoplasm. The catalysed reaction is 7-phospho-2-dehydro-3-deoxy-D-arabino-heptonate = 3-dehydroquinate + phosphate. Its pathway is metabolic intermediate biosynthesis; chorismate biosynthesis; chorismate from D-erythrose 4-phosphate and phosphoenolpyruvate: step 2/7. Catalyzes the conversion of 3-deoxy-D-arabino-heptulosonate 7-phosphate (DAHP) to dehydroquinate (DHQ). The chain is 3-dehydroquinate synthase from Dechloromonas aromatica (strain RCB).